Reading from the N-terminus, the 229-residue chain is Potassium/proton antiporter CemA (229 aa).

3 consecutive transmembrane segments (helical) span residues 7–27 (FTPL…SLSF), 114–134 (IICF…LVIL), and 189–209 (ILSG…KFWI).

Belongs to the CemA family.

The protein resides in the plastid. It is found in the chloroplast inner membrane. It catalyses the reaction K(+)(in) + H(+)(out) = K(+)(out) + H(+)(in). Functionally, contributes to K(+)/H(+) antiport activity by supporting proton efflux to control proton extrusion and homeostasis in chloroplasts in a light-dependent manner to modulate photosynthesis. Prevents excessive induction of non-photochemical quenching (NPQ) under continuous-light conditions. Indirectly promotes efficient inorganic carbon uptake into chloroplasts. The protein is Potassium/proton antiporter CemA of Panax ginseng (Korean ginseng).